The chain runs to 235 residues: Phosphoribosylformylglycinamidine synthase subunit PurQ (235 aa).

Positions 4–234 (GILVFPGTNC…VQHLTGRVIR (231 aa)) constitute a Glutamine amidotransferase type-1 domain. Catalysis depends on Cys86, which acts as the Nucleophile. Catalysis depends on residues His203 and Glu205.

Part of the FGAM synthase complex composed of 1 PurL, 1 PurQ and 2 PurS subunits.

The protein localises to the cytoplasm. The enzyme catalyses N(2)-formyl-N(1)-(5-phospho-beta-D-ribosyl)glycinamide + L-glutamine + ATP + H2O = 2-formamido-N(1)-(5-O-phospho-beta-D-ribosyl)acetamidine + L-glutamate + ADP + phosphate + H(+). It catalyses the reaction L-glutamine + H2O = L-glutamate + NH4(+). The protein operates within purine metabolism; IMP biosynthesis via de novo pathway; 5-amino-1-(5-phospho-D-ribosyl)imidazole from N(2)-formyl-N(1)-(5-phospho-D-ribosyl)glycinamide: step 1/2. Part of the phosphoribosylformylglycinamidine synthase complex involved in the purines biosynthetic pathway. Catalyzes the ATP-dependent conversion of formylglycinamide ribonucleotide (FGAR) and glutamine to yield formylglycinamidine ribonucleotide (FGAM) and glutamate. The FGAM synthase complex is composed of three subunits. PurQ produces an ammonia molecule by converting glutamine to glutamate. PurL transfers the ammonia molecule to FGAR to form FGAM in an ATP-dependent manner. PurS interacts with PurQ and PurL and is thought to assist in the transfer of the ammonia molecule from PurQ to PurL. This is Phosphoribosylformylglycinamidine synthase subunit PurQ from Symbiobacterium thermophilum (strain DSM 24528 / JCM 14929 / IAM 14863 / T).